The following is a 182-amino-acid chain: Large ribosomal subunit protein uL6 (182 aa).

This sequence belongs to the universal ribosomal protein uL6 family. In terms of assembly, part of the 50S ribosomal subunit.

Its function is as follows. This protein binds to the 23S rRNA, and is important in its secondary structure. It is located near the subunit interface in the base of the L7/L12 stalk, and near the tRNA binding site of the peptidyltransferase center. The protein is Large ribosomal subunit protein uL6 of Methanocaldococcus jannaschii (strain ATCC 43067 / DSM 2661 / JAL-1 / JCM 10045 / NBRC 100440) (Methanococcus jannaschii).